Here is a 71-residue protein sequence, read N- to C-terminus: Protein KleB (71 aa).

Positions 9-28 (VTTNCRRCGKSISTLSRSLI) form a DNA-binding region, H-T-H motif.

The chain is Protein KleB (kleB) from Escherichia coli.